Reading from the N-terminus, the 438-residue chain is UDP-N-acetylmuramoylalanine--D-glutamate ligase (438 aa).

G112 to T118 provides a ligand contact to ATP.

The protein belongs to the MurCDEF family.

It is found in the cytoplasm. It catalyses the reaction UDP-N-acetyl-alpha-D-muramoyl-L-alanine + D-glutamate + ATP = UDP-N-acetyl-alpha-D-muramoyl-L-alanyl-D-glutamate + ADP + phosphate + H(+). Its pathway is cell wall biogenesis; peptidoglycan biosynthesis. In terms of biological role, cell wall formation. Catalyzes the addition of glutamate to the nucleotide precursor UDP-N-acetylmuramoyl-L-alanine (UMA). This chain is UDP-N-acetylmuramoylalanine--D-glutamate ligase, found in Yersinia pestis bv. Antiqua (strain Antiqua).